Here is a 319-residue protein sequence, read N- to C-terminus: Beta-ketoacyl-[acyl-carrier-protein] synthase III (319 aa).

Residues Cys113 and His246 contribute to the active site. The ACP-binding stretch occupies residues 247 to 251; the sequence is QANRR. Residue Asn276 is part of the active site.

It belongs to the thiolase-like superfamily. FabH family. Homodimer.

The protein localises to the cytoplasm. It carries out the reaction malonyl-[ACP] + acetyl-CoA + H(+) = 3-oxobutanoyl-[ACP] + CO2 + CoA. It functions in the pathway lipid metabolism; fatty acid biosynthesis. Functionally, catalyzes the condensation reaction of fatty acid synthesis by the addition to an acyl acceptor of two carbons from malonyl-ACP. Catalyzes the first condensation reaction which initiates fatty acid synthesis and may therefore play a role in governing the total rate of fatty acid production. Possesses both acetoacetyl-ACP synthase and acetyl transacylase activities. Its substrate specificity determines the biosynthesis of branched-chain and/or straight-chain of fatty acids. This is Beta-ketoacyl-[acyl-carrier-protein] synthase III from Rhizorhabdus wittichii (strain DSM 6014 / CCUG 31198 / JCM 15750 / NBRC 105917 / EY 4224 / RW1) (Sphingomonas wittichii).